A 348-amino-acid chain; its full sequence is Hereditary hemochromatosis protein homolog (348 aa).

The first 22 residues, 1-22 (MGPRARPALFFLILLRTVAAQG), serve as a signal peptide directing secretion. Positions 23 to 114 (RPPRSHSLRY…IMDNHNHSKE (92 aa)) are alpha-1. Topologically, residues 23–306 (RPPRSHSLRY…WEPSLSNTLV (284 aa)) are extracellular. 3 N-linked (GlcNAc...) asparagine glycosylation sites follow: Asn-110, Asn-130, and Asn-234. The interval 115 to 205 (SHTLQVILGC…ELGRGVLDQQ (91 aa)) is alpha-2. 2 disulfides stabilise this stretch: Cys-124–Cys-187 and Cys-225–Cys-282. The alpha-3 stretch occupies residues 206–297 (VPPLVKVTHH…GLDQPLTATW (92 aa)). The Ig-like C1-type domain occupies 207-296 (PPLVKVTHHV…PGLDQPLTAT (90 aa)). The interval 298–306 (EPSLSNTLV) is connecting peptide. The chain crosses the membrane as a helical span at residues 307–330 (TGVISGIAVCVIIFLIGILFRILR). The Cytoplasmic segment spans residues 331 to 348 (KRQASRGAMGDYVLAECE).

This sequence belongs to the MHC class I family. As to quaternary structure, binds TFR through the extracellular domain in a pH-dependent manner.

Its subcellular location is the cell membrane. Binds to transferrin receptor (TFR) and reduces its affinity for iron-loaded transferrin. The chain is Hereditary hemochromatosis protein homolog (HFE) from Rhinoceros unicornis (Greater Indian rhinoceros).